The following is a 518-amino-acid chain: Probable cytosol aminopeptidase (518 aa).

Mn(2+) is bound by residues K270 and D275. The active site involves K282. D293, D352, and E354 together coordinate Mn(2+). The active site involves R356. Polar residues predominate over residues S495–T507. Residues S495–E518 form a disordered region.

This sequence belongs to the peptidase M17 family. The cofactor is Mn(2+).

The protein resides in the cytoplasm. It carries out the reaction Release of an N-terminal amino acid, Xaa-|-Yaa-, in which Xaa is preferably Leu, but may be other amino acids including Pro although not Arg or Lys, and Yaa may be Pro. Amino acid amides and methyl esters are also readily hydrolyzed, but rates on arylamides are exceedingly low.. The catalysed reaction is Release of an N-terminal amino acid, preferentially leucine, but not glutamic or aspartic acids.. Its function is as follows. Presumably involved in the processing and regular turnover of intracellular proteins. Catalyzes the removal of unsubstituted N-terminal amino acids from various peptides. This Nitrosospira multiformis (strain ATCC 25196 / NCIMB 11849 / C 71) protein is Probable cytosol aminopeptidase.